The following is a 237-amino-acid chain: MRPSGRTPDQLRSLSIETGFTRHAEGSCLISFGDTRVLVTASLEERLPSWLRGKGQGWVTAEYGMLPRSTHSRTNREAARGKQSGRTQEIQRLIGRSLRAGIDLKKLGERQITIDCDVLQADGGTRTASISGGWVALRLAVNKLLASGQLTEDPIISQVAAVSCGISQGVPVLDLDYAEDSTAEADANFVMMGDSRLIEVQASAEGAPYDEEGLLRLLRLARMGCQQIFAEQKKAVA.

Phosphate contacts are provided by residues Arg86 and 124 to 126; that span reads GTR.

This sequence belongs to the RNase PH family. Homohexameric ring arranged as a trimer of dimers.

It carries out the reaction tRNA(n+1) + phosphate = tRNA(n) + a ribonucleoside 5'-diphosphate. Its function is as follows. Phosphorolytic 3'-5' exoribonuclease that plays an important role in tRNA 3'-end maturation. Removes nucleotide residues following the 3'-CCA terminus of tRNAs; can also add nucleotides to the ends of RNA molecules by using nucleoside diphosphates as substrates, but this may not be physiologically important. Probably plays a role in initiation of 16S rRNA degradation (leading to ribosome degradation) during starvation. The polypeptide is Ribonuclease PH (Zymomonas mobilis subsp. mobilis (strain ATCC 31821 / ZM4 / CP4)).